Consider the following 396-residue polypeptide: Serine/threonine-protein kinase VRK1 (396 aa).

The Protein kinase domain maps to 37-317 (WKLGSPIGQG…LLDYVEKPLY (281 aa)). ATP contacts are provided by residues 43 to 51 (IGQGGFGCI) and Lys-71. Lys-71 participates in a covalent cross-link: Glycyl lysine isopeptide (Lys-Gly) (interchain with G-Cter in SUMO2). Catalysis depends on Asp-177, which acts as the Proton acceptor. A disordered region spans residues 352-396 (KPVAKKRKKEAEESVESSVEDMECSDKQTEEATQTRSKTRKRVQK). Positions 364–374 (ESVESSVEDME) are enriched in acidic residues. The residue at position 376 (Ser-376) is a Phosphoserine. Residues 387–393 (RSKTRKR) form a required for interaction with the nucleosome region.

Belongs to the protein kinase superfamily. CK1 Ser/Thr protein kinase family. VRK subfamily. As to quaternary structure, interacts with HDAC1, KAT2B, SETDB1, KDM3A and KDM4A. Associates with the nucleosome through interactions with nucleosome DNA, histone H2A and histone H2B; the interaction with H2A and H2B is mediated by the nucleosome acidic patch, a cluster of negatively charged residues of H2A and H2B forming a cleft within the nucleosome core. Post-translationally, autophosphorylated at various serine and threonine residues. Autophosphorylation does not impair its ability to phosphorylate p53/TP53. Phosphorylation by PLK3 leads to induction of Golgi fragmentation during mitosis.

It is found in the nucleus. Its subcellular location is the cytoplasm. It localises to the cajal body. The catalysed reaction is L-seryl-[protein] + ATP = O-phospho-L-seryl-[protein] + ADP + H(+). It catalyses the reaction L-threonyl-[protein] + ATP = O-phospho-L-threonyl-[protein] + ADP + H(+). With respect to regulation, active in presence of Mn(2+), Mg(2+) and Zn(2+), but is not functional with Ca(2+) or Cu(2+). Has a higher affinity for Mn(2+) than for Mg(2+). RAN inhibits its autophosphorylation and its ability to phosphorylate histone H3. Functionally, serine/threonine kinase involved in the regulation of key cellular processes including the cell cycle, nuclear condensation, transcription regulation, and DNA damage response. Controls chromatin organization and remodeling by mediating phosphorylation of histone H3 on 'Thr-4' and histone H2AX (H2aXT4ph). It also phosphorylates KAT5 in response to DNA damage, promoting KAT5 association with chromatin and histone acetyltransferase activity. Is involved in the regulation of cell cycle progression of neural progenitors, and is required for proper cortical neuronal migration. Is involved in neurite elongation and branching in motor neurons, and has an essential role in Cajal bodies assembly, acting through COIL phosphorylation and the control of coilin degradation. Involved in Golgi disassembly during the cell cycle: following phosphorylation by PLK3 during mitosis, it is required to induce Golgi fragmentation. Phosphorylates BANF1: disrupts its ability to bind DNA, reduces its binding to LEM domain-containing proteins and causes its relocalization from the nucleus to the cytoplasm. Phosphorylates TP53BP1 and p53/TP53 on 'Thr-18', preventing the interaction between p53/TP53 and MDM2. Phosphorylates ATF2 which activates its transcriptional activity. Phosphorylates JUN. This Bos taurus (Bovine) protein is Serine/threonine-protein kinase VRK1 (VRK1).